The following is a 917-amino-acid chain: Protein translocase subunit SecA (917 aa).

Residues Q87, 105–109 (GEGKT), and D516 contribute to the ATP site. Residues C901, C903, C912, and H913 each coordinate Zn(2+).

The protein belongs to the SecA family. As to quaternary structure, monomer and homodimer. Part of the essential Sec protein translocation apparatus which comprises SecA, SecYEG and auxiliary proteins SecDF-YajC and YidC. The cofactor is Zn(2+).

The protein localises to the cell inner membrane. It is found in the cytoplasm. The catalysed reaction is ATP + H2O + cellular proteinSide 1 = ADP + phosphate + cellular proteinSide 2.. Functionally, part of the Sec protein translocase complex. Interacts with the SecYEG preprotein conducting channel. Has a central role in coupling the hydrolysis of ATP to the transfer of proteins into and across the cell membrane, serving both as a receptor for the preprotein-SecB complex and as an ATP-driven molecular motor driving the stepwise translocation of polypeptide chains across the membrane. This is Protein translocase subunit SecA from Verminephrobacter eiseniae (strain EF01-2).